A 176-amino-acid polypeptide reads, in one-letter code: Odorant-binding protein 2a (176 aa).

The signal sequence occupies residues 1–19 (MKSLLLTILLLGLVAVLKA). Asparagine 42 and asparagine 124 each carry an N-linked (GlcNAc...) asparagine glycan. The cysteines at positions 79 and 172 are disulfide-linked.

Belongs to the calycin superfamily. Lipocalin family. In terms of tissue distribution, expressed in the liver (at protein level). Expressed in epididymis.

It localises to the secreted. Its function is as follows. Involved in the regulation of systematic glucose homeostasis and insulin sensitivity. Involved in the regulation of liver lipid levels by positive regulation of hepatic lipogenesis and negative regulation of fatty acid beta-oxidation; via downstream transcriptional regulation of CPT1A and hepatic lipogenic program gene expression. May regulate hepatic lipogenesis and fatty acid beta-oxidation in an autocrine or paracrine manner. The polypeptide is Odorant-binding protein 2a (Obp2a) (Mus musculus (Mouse)).